Here is a 259-residue protein sequence, read N- to C-terminus: ATP synthase subunit a (259 aa).

6 helical membrane-spanning segments follow: residues 37–57 (LSIT…FLFM), 101–121 (YFPA…LGLI), 131–151 (LVVT…LAIV), 157–177 (FIGF…MVPI), 203–223 (VLAI…LMPA), and 232–252 (FELF…CVYI).

The protein belongs to the ATPase A chain family. As to quaternary structure, F-type ATPases have 2 components, CF(1) - the catalytic core - and CF(0) - the membrane proton channel. CF(1) has five subunits: alpha(3), beta(3), gamma(1), delta(1), epsilon(1). CF(0) has three main subunits: a(1), b(2) and c(9-12). The alpha and beta chains form an alternating ring which encloses part of the gamma chain. CF(1) is attached to CF(0) by a central stalk formed by the gamma and epsilon chains, while a peripheral stalk is formed by the delta and b chains.

The protein localises to the cell inner membrane. Functionally, key component of the proton channel; it plays a direct role in the translocation of protons across the membrane. This Magnetococcus marinus (strain ATCC BAA-1437 / JCM 17883 / MC-1) protein is ATP synthase subunit a.